The chain runs to 269 residues: Monofunctional glycosyltransferase (269 aa).

Residues 46-66 (ILLTILIIIALFIGIMYFLST) form a helical membrane-spanning segment.

The protein belongs to the glycosyltransferase 51 family.

The protein localises to the cell membrane. It catalyses the reaction [GlcNAc-(1-&gt;4)-Mur2Ac(oyl-L-Ala-gamma-D-Glu-L-Lys-D-Ala-D-Ala)](n)-di-trans,octa-cis-undecaprenyl diphosphate + beta-D-GlcNAc-(1-&gt;4)-Mur2Ac(oyl-L-Ala-gamma-D-Glu-L-Lys-D-Ala-D-Ala)-di-trans,octa-cis-undecaprenyl diphosphate = [GlcNAc-(1-&gt;4)-Mur2Ac(oyl-L-Ala-gamma-D-Glu-L-Lys-D-Ala-D-Ala)](n+1)-di-trans,octa-cis-undecaprenyl diphosphate + di-trans,octa-cis-undecaprenyl diphosphate + H(+). It participates in cell wall biogenesis; peptidoglycan biosynthesis. In terms of biological role, peptidoglycan polymerase that catalyzes glycan chain elongation using lipid-linked disaccharide-pentapeptide as the substrate. The chain is Monofunctional glycosyltransferase from Staphylococcus aureus (strain JH1).